A 1658-amino-acid chain; its full sequence is Collagen alpha-1(XXVII) chain B (1658 aa).

Positions 1–38 are cleaved as a signal peptide; that stretch reads MEPDNTPSSRLRAAGVGGRAVFFCMVLYCTCCLRLAQA. The Laminin G-like domain occupies 66–229; the sequence is GVILTTRARI…NYCKYIKKQC (164 aa). Residues 308–323 show a composition bias toward polar residues; the sequence is SIRNRTSQISPKPTQQ. Disordered stretches follow at residues 308–332, 345–364, 427–550, 571–614, 637–1332, and 1377–1415; these read SIRN…KKER, VTDS…TTTT, GLKG…GNMG, GERG…APGP, GPKG…DAGE, and IIGP…GPPG. Residues 424-1417 form a triple-helical region region; the sequence is ELTGLKGEPG…RGPPGPPGLP (994 aa). Collagen-like domains follow at residues 425 to 478, 493 to 552, 556 to 615, 622 to 681, 685 to 744, 748 to 807, and 811 to 870; these read LTGL…GNPG, GLVG…MGPK, GFIG…PGPV, GDMG…PGLP, GKPG…PGLE, GPVG…MGLA, and GDRG…RGPD. Over residues 434 to 444 the composition is skewed to pro residues; it reads LPGPPGPPGQP. Positions 491-506 are enriched in low complexity; that stretch reads DPGLVGLPGQPGQPGR. Low complexity-rich tracts occupy residues 657–666 and 678–692; these read LGLPGEPGEP and PGLP…PQGK. A compositionally biased stretch (gly residues) spans 733–742; the sequence is GIPGPGGLPG. Low complexity-rich tracts occupy residues 837–852 and 875–890; these read RGLS…HGSR and EKGM…PPGK. Collagen-like domains lie at 892–951, 952–1011, 1024–1083, 1084–1137, 1139–1198, 1199–1258, 1268–1327, and 1361–1420; these read GLSG…IGLP, GKAG…VGLE, GTEG…IGPK, GSRG…DGKV, GPPG…KGSK, GNKG…PGDL, GKPG…KGQP, and GPQG…PAVA. Positions 1040 to 1058 are enriched in basic and acidic residues; that stretch reads PEGKPGKIGERGKPGEKGS. A compositionally biased stretch (low complexity) spans 1112 to 1124; the sequence is HQGPQGSLGSPGP. Residues 1125–1137 are compositionally biased toward basic and acidic residues; sequence KGEKGEQGDDGKV. Low complexity predominate over residues 1215–1230; the sequence is NRGSPGPVGVPGPRGV. A compositionally biased stretch (gly residues) spans 1307-1316; that stretch reads GLNGGMGFPG. The span at 1402 to 1415 shows a compositional bias: pro residues; the sequence is RGPPGPRGPPGPPG. A propeptide spans 1421–1658 (C-terminal propeptide); that stretch reads FSHENEALGA…HLEVGPVCFL (238 aa). One can recognise a Fibrillar collagen NC1 domain in the interval 1458–1658; it reads SEIFKTLHYL…HLEVGPVCFL (201 aa). 3 cysteine pairs are disulfide-bonded: C1488/C1520, C1529/C1656, and C1565/C1609. Ca(2+) is bound by residues D1506, N1508, C1511, and D1514. N1567 carries an N-linked (GlcNAc...) asparagine glycan.

It belongs to the fibrillar collagen family. As to expression, weakly expressed in the notochord from the 6 somite stage. Expressed throughout the notochord at 13 somites, then becomes restricted to the distal tip of the notochord by 24 hpf. Also expressed in head cartilages by 48 hpf.

It is found in the secreted. The protein localises to the extracellular space. The protein resides in the extracellular matrix. May play a role during the calcification of cartilage and the transition of cartilage to bone. Together with col27a1a, plays a role in development of the notochord and axial skeleton. This chain is Collagen alpha-1(XXVII) chain B (col27a1b), found in Danio rerio (Zebrafish).